Here is a 108-residue protein sequence, read N- to C-terminus: Thiosulfate sulfurtransferase GlpE (108 aa).

The region spanning 17 to 105 is the Rhodanese domain; the sequence is QEKEAVLVDI…WQRQFPAEVA (89 aa). C65 (cysteine persulfide intermediate) is an active-site residue.

It belongs to the GlpE family.

It is found in the cytoplasm. The catalysed reaction is thiosulfate + hydrogen cyanide = thiocyanate + sulfite + 2 H(+). It catalyses the reaction thiosulfate + [thioredoxin]-dithiol = [thioredoxin]-disulfide + hydrogen sulfide + sulfite + 2 H(+). Functionally, transferase that catalyzes the transfer of sulfur from thiosulfate to thiophilic acceptors such as cyanide or dithiols. May function in a CysM-independent thiosulfate assimilation pathway by catalyzing the conversion of thiosulfate to sulfite, which can then be used for L-cysteine biosynthesis. This is Thiosulfate sulfurtransferase GlpE from Escherichia coli O139:H28 (strain E24377A / ETEC).